Consider the following 116-residue polypeptide: Chaperone protein SicP (116 aa).

This sequence belongs to the SicP family.

The protein resides in the cytoplasm. Functionally, molecular chaperone required for SptP stabilization and secretion. The protein is Chaperone protein SicP (sicP) of Salmonella paratyphi A (strain ATCC 9150 / SARB42).